The primary structure comprises 240 residues: Large ribosomal subunit protein bL25 (240 aa).

The disordered stretch occupies residues 1–24 (MATVMEFKATARPKSGKGAARAER).

Belongs to the bacterial ribosomal protein bL25 family. CTC subfamily. Part of the 50S ribosomal subunit; part of the 5S rRNA/L5/L18/L25 subcomplex. Contacts the 5S rRNA. Binds to the 5S rRNA independently of L5 and L18.

Its function is as follows. This is one of the proteins that binds to the 5S RNA in the ribosome where it forms part of the central protuberance. In Rhodopseudomonas palustris (strain HaA2), this protein is Large ribosomal subunit protein bL25.